Here is a 77-residue protein sequence, read N- to C-terminus: Translation initiation factor IF-1, chloroplastic (77 aa).

The S1-like domain maps to Met1–Arg71.

It belongs to the IF-1 family. Component of the 30S ribosomal translation pre-initiation complex which assembles on the 30S ribosome in the order IF-2 and IF-3, IF-1 and N-formylmethionyl-tRNA(fMet); mRNA recruitment can occur at any time during PIC assembly.

It localises to the plastid. The protein localises to the chloroplast. Its function is as follows. One of the essential components for the initiation of protein synthesis. Stabilizes the binding of IF-2 and IF-3 on the 30S subunit to which N-formylmethionyl-tRNA(fMet) subsequently binds. Helps modulate mRNA selection, yielding the 30S pre-initiation complex (PIC). Upon addition of the 50S ribosomal subunit IF-1, IF-2 and IF-3 are released leaving the mature 70S translation initiation complex. The protein is Translation initiation factor IF-1, chloroplastic of Cercidiphyllum japonicum (Katsura tree).